A 725-amino-acid polypeptide reads, in one-letter code: Kinesin-like protein KIN-8A (725 aa).

The interval 1 to 32 (MPVSTRSKVMKQERNEQENTNLNLPLRNPHQG) is disordered. The region spanning 151-481 (RILVFVRLRP…LHWADRAKEI (331 aa)) is the Kinesin motor domain. ATP is bound at residue 243–250 (GATGAGKT). Coiled coils occupy residues 499–541 (EGAD…AANN) and 583–617 (ESLK…EHGL). 2 disordered regions span residues 652–672 (GSLR…RFAS) and 691–725 (SPAL…HMKH). The segment covering 655–665 (RPKEKEKELKS) has biased composition (basic and acidic residues).

This sequence belongs to the TRAFAC class myosin-kinesin ATPase superfamily. Kinesin family. KIN-8 subfamily.

The chain is Kinesin-like protein KIN-8A from Arabidopsis thaliana (Mouse-ear cress).